The sequence spans 1383 residues: Putative autophagy-related protein 11 (1383 aa).

Coiled-coil stretches lie at residues 16–49 and 117–324; these read DKNNDILISKQKIEDLKKSIENLLNDKNAHYELN and NLFL…QNKE. Basic and acidic residues-rich tracts occupy residues 1151–1224 and 1233–1249; these read EEEK…EDRK and HSSDKEEKYNKKEKTKE. Residues 1151-1249 are disordered; the sequence is EEEKKKNEEE…KYNKKEKTKE (99 aa).

This sequence belongs to the ATG11 family.

Functionally, involved in cytoplasm to vacuole transport (Cvt), pexophagy, mitophagy and nucleophagy. Works as scaffold proteins that recruit ATG proteins to the pre-autophagosome (PAS), the site of vesicle/autophagosome formation. This chain is Putative autophagy-related protein 11, found in Plasmodium falciparum (isolate 3D7).